The sequence spans 98 residues: NADH-ubiquinone oxidoreductase chain 4L (98 aa).

The next 3 membrane-spanning stretches (helical) occupy residues 1–21 (MSMVYANIFLAFIMSLMGLLM), 29–49 (SLLCLEGMMLSLFVMMTATIL), and 61–81 (IILLVFAACEAALGLSLLVTV).

The protein belongs to the complex I subunit 4L family. As to quaternary structure, core subunit of respiratory chain NADH dehydrogenase (Complex I) which is composed of 45 different subunits.

The protein localises to the mitochondrion inner membrane. It carries out the reaction a ubiquinone + NADH + 5 H(+)(in) = a ubiquinol + NAD(+) + 4 H(+)(out). Functionally, core subunit of the mitochondrial membrane respiratory chain NADH dehydrogenase (Complex I) which catalyzes electron transfer from NADH through the respiratory chain, using ubiquinone as an electron acceptor. Part of the enzyme membrane arm which is embedded in the lipid bilayer and involved in proton translocation. This Pusa caspica (Caspian seal) protein is NADH-ubiquinone oxidoreductase chain 4L (MT-ND4L).